The primary structure comprises 296 residues: GTPase Era (296 aa).

One can recognise an Era-type G domain in the interval 7–174; sequence KCSMNAIVGT…INYLCEISPS (168 aa). Residues 15-22 form a G1 region; the sequence is GTTNAGKS. A GTP-binding site is contributed by 15–22; it reads GTTNAGKS. The segment at 41 to 45 is G2; the sequence is QTTRV. A G3 region spans residues 62 to 65; that stretch reads DTPG. GTP-binding positions include 62–66 and 124–127; these read DTPGI and NKID. Residues 124-127 are G4; that stretch reads NKID. Residues 153–155 form a G5 region; it reads ISA. The 78-residue stretch at 205 to 282 folds into the KH type-2 domain; sequence LHHELPYSLS…HLFLFVKVRE (78 aa).

Belongs to the TRAFAC class TrmE-Era-EngA-EngB-Septin-like GTPase superfamily. Era GTPase family. As to quaternary structure, monomer.

It localises to the cytoplasm. The protein resides in the cell inner membrane. Functionally, an essential GTPase that binds both GDP and GTP, with rapid nucleotide exchange. Plays a role in 16S rRNA processing and 30S ribosomal subunit biogenesis and possibly also in cell cycle regulation and energy metabolism. The polypeptide is GTPase Era (Ehrlichia canis (strain Jake)).